Consider the following 21-residue polypeptide: QHLADYDEVEDDRAKLHLDAR.

Gln-1 carries the post-translational modification Pyrrolidone carboxylic acid. The residue at position 6 (Tyr-6) is a Sulfotyrosine.

In terms of assembly, heterohexamer; disulfide linked. Contains 2 sets of 3 non-identical chains (alpha, beta and gamma). The 2 heterotrimers are in head to head conformation with the N-termini in a small central domain. Post-translationally, conversion of fibrinogen to fibrin is triggered by thrombin, which cleaves fibrinopeptides A and B from alpha and beta chains, and thus exposes the N-terminal polymerization sites responsible for the formation of the soft clot.

The protein resides in the secreted. Cleaved by the protease thrombin to yield monomers which, together with fibrinogen alpha (FGA) and fibrinogen gamma (FGG), polymerize to form an insoluble fibrin matrix. Fibrin has a major function in hemostasis as one of the primary components of blood clots. In addition, functions during the early stages of wound repair to stabilize the lesion and guide cell migration during re-epithelialization. Was originally thought to be essential for platelet aggregation, based on in vitro studies using anticoagulated blood. However subsequent studies have shown that it is not absolutely required for thrombus formation in vivo. Enhances expression of SELP in activated platelets. Maternal fibrinogen is essential for successful pregnancy. Fibrin deposition is also associated with infection, where it protects against IFNG-mediated hemorrhage. May also facilitate the antibacterial immune response via both innate and T-cell mediated pathways. The chain is Fibrinogen beta chain (FGB) from Rangifer tarandus (Reindeer).